Consider the following 470-residue polypeptide: Light-independent protochlorophyllide reductase subunit N (470 aa).

Residues C22, C47, and C107 each coordinate [4Fe-4S] cluster.

It belongs to the BchN/ChlN family. As to quaternary structure, protochlorophyllide reductase is composed of three subunits; ChlL, ChlN and ChlB. Forms a heterotetramer of two ChlB and two ChlN subunits. Requires [4Fe-4S] cluster as cofactor.

The protein resides in the plastid. Its subcellular location is the chloroplast. It carries out the reaction chlorophyllide a + oxidized 2[4Fe-4S]-[ferredoxin] + 2 ADP + 2 phosphate = protochlorophyllide a + reduced 2[4Fe-4S]-[ferredoxin] + 2 ATP + 2 H2O. It participates in porphyrin-containing compound metabolism; chlorophyll biosynthesis (light-independent). Functionally, component of the dark-operative protochlorophyllide reductase (DPOR) that uses Mg-ATP and reduced ferredoxin to reduce ring D of protochlorophyllide (Pchlide) to form chlorophyllide a (Chlide). This reaction is light-independent. The NB-protein (ChlN-ChlB) is the catalytic component of the complex. This chain is Light-independent protochlorophyllide reductase subunit N, found in Pinus koraiensis (Korean pine).